A 332-amino-acid chain; its full sequence is Phospholipase A2 inhibitor beta (332 aa).

The N-terminal stretch at 1 to 23 (MKSSVPSLLFVSLVMSLNSYTQQ) is a signal peptide. A glycan (N-linked (GlcNAc...) asparagine) is linked at asparagine 35. 8 LRR repeats span residues 78-101 (LPNL…LFRN), 103-125 (PELH…IFTS), 127-149 (TSLT…WFET), 150-173 (LKEL…CFDK), 175-197 (EKLT…MFSG), 198-221 (LDNL…SFHG), 223-245 (PKLS…VFQP), and 247-269 (NHXV…VAIP). The N-linked (GlcNAc...) asparagine glycan is linked to asparagine 232. A glycan (N-linked (GlcNAc...) asparagine) is linked at asparagine 272. In terms of domain architecture, LRRCT spans 280–331 (NPWACNCRMDNLLTWVKEHKIDLYSKQEIVCAFPKSFKGEEATSLHRSQICP).

Belongs to the beta-type phospholipase A2 inhibitor family. As to quaternary structure, homotrimer.

Its subcellular location is the secreted. Inhibits the enzymatic activity of the basic phospholipase A2 (PLA2). The polypeptide is Phospholipase A2 inhibitor beta (Elaphe climacophora (Japanese rat snake)).